A 137-amino-acid polypeptide reads, in one-letter code: Large ribosomal subunit protein uL16 (137 aa).

The tract at residues 1-22 (MLQPKRTKFRKVQKGRNRGLAH) is disordered.

The protein belongs to the universal ribosomal protein uL16 family. In terms of assembly, part of the 50S ribosomal subunit.

Functionally, binds 23S rRNA and is also seen to make contacts with the A and possibly P site tRNAs. The polypeptide is Large ribosomal subunit protein uL16 (Chromohalobacter salexigens (strain ATCC BAA-138 / DSM 3043 / CIP 106854 / NCIMB 13768 / 1H11)).